Here is a 116-residue protein sequence, read N- to C-terminus: NADH-ubiquinone oxidoreductase chain 3 (116 aa).

3 helical membrane-spanning segments follow: residues 3-23, 56-76, and 85-105; these read LITT…TISF, FFLI…LLPL, and PALT…GLIY.

This sequence belongs to the complex I subunit 3 family.

Its subcellular location is the mitochondrion membrane. The enzyme catalyses a ubiquinone + NADH + 5 H(+)(in) = a ubiquinol + NAD(+) + 4 H(+)(out). Functionally, core subunit of the mitochondrial membrane respiratory chain NADH dehydrogenase (Complex I) that is believed to belong to the minimal assembly required for catalysis. Complex I functions in the transfer of electrons from NADH to the respiratory chain. The immediate electron acceptor for the enzyme is believed to be ubiquinone. This Salmo salar (Atlantic salmon) protein is NADH-ubiquinone oxidoreductase chain 3 (MT-ND3).